We begin with the raw amino-acid sequence, 673 residues long: MNRSANPEAASSTSHVKFDLGKSVDISSTDTKDGGTARSPLEPADKSDTTESKSESGSDSRSEEDKESPASIKEIKAETPQPKDRPGVQIKLSWSQKIKSWTAKKKRKLYQLVIDIIMMNRVCKMFRQGLRGFREYQIIEPVHKKHPDFSFWDKKKQGRISFVTEDFAAQEGHFPPRAISITQKKPSWRTHQEIQDLCNILQALDCYRSYTESLQLLLAKVIRFERFGRRRVIVKKGQMGNSFYFIYLGTVAITEDEDGSSAFLDPHPTLLHRGGSFGEMGLLSTTVRSATVVCMEETEFLVVDREDFVANKLGDEVQKETQYRYNFFRNLDIFQSWSEEKLWKLVALGRIERFSYGQMVSKDFMNSAFITFICQGNCEILRLVALGDCSAYYKWVWQQLELLDHKPLRIHDNEISPKERFKELQIKSYPLQDFTYLKLLRLQKAREQQGIDFHGKINKVENTLPKLLGPKIKSRFGHLVKCSMVNTKFGELPKEAIVGVYMKIHKTEEGEIVGLHQAFVPEIQRDCRPFILLSLGSELIQVRKEKFYDMVDEETRAKIIKMDVDYPSDEDLCQSFLKENDYIVFRKDLLRLLVEPLNKSPFIPVQTKKKEIYNHKSLFLDLCSLEKKVKQHYPIFLAPQKYLPPLRVVQAISAPRHKIQELLPQYKNAGVLI.

Residues 1 to 15 show a composition bias toward polar residues; sequence MNRSANPEAASSTSH. The tract at residues 1-89 is disordered; it reads MNRSANPEAA…PQPKDRPGVQ (89 aa). Residues 43–86 are compositionally biased toward basic and acidic residues; sequence PADKSDTTESKSESGSDSRSEEDKESPASIKEIKAETPQPKDRP. 206–329 is an a nucleoside 3',5'-cyclic phosphate binding site; it reads CYRSYTESLQ…ETQYRYNFFR (124 aa).

In terms of tissue distribution, testis-specific. Exclusively expressed in testicular germ cells while it is not present in mature sperm (at protein level).

It localises to the cytoplasm. The protein localises to the cytosol. Its function is as follows. Essential for male fertility. Plays an important role in spermatogenesis and regulates sperm motility by controlling the development of the flagellar bending of sperm. This Mus musculus (Mouse) protein is Cyclic nucleotide-binding domain-containing protein 2 (Cnbd2).